We begin with the raw amino-acid sequence, 1108 residues long: Ubiquitin carboxyl-terminal hydrolase 5 (1108 aa).

Positions 55–187 constitute an MATH domain; sequence FQRFTWHIKS…DGALLLTAYV (133 aa). Active-site nucleophile residues include cysteine 120 and cysteine 222. Residues 213–528 enclose the USP domain; the sequence is VGLKNQGATC…SAYMLLYLRK (316 aa). The Proton acceptor role is filled by histidine 464.

The protein belongs to the peptidase C19 family.

The protein localises to the nucleus. The catalysed reaction is Thiol-dependent hydrolysis of ester, thioester, amide, peptide and isopeptide bonds formed by the C-terminal Gly of ubiquitin (a 76-residue protein attached to proteins as an intracellular targeting signal).. In terms of biological role, hydrolase that deubiquitinates target proteins. Cleaves the UBL propeptide in sde2. The protein is Ubiquitin carboxyl-terminal hydrolase 5 (ubp5) of Schizosaccharomyces pombe (strain 972 / ATCC 24843) (Fission yeast).